The following is a 433-amino-acid chain: Serine/threonine-protein kinase DCLK1 (433 aa).

Residues 1–74 (MLELIEVNGT…GEEESDEGFQ (74 aa)) are disordered. S23, S25, S27, S30, S40, S45, S46, S48, S57, and S69 each carry phosphoserine. A compositionally biased stretch (low complexity) spans 40 to 57 (SQHGGSSTSLSSTKVCSS). The segment covering 59–71 (DENDGPGEEESDE) has biased composition (acidic residues). Residues 83–340 (YKVGRTIGDG…AVQVLEHPWV (258 aa)) form the Protein kinase domain. ATP is bound by residues 89 to 97 (IGDGNFAVV) and K112. D204 serves as the catalytic Proton acceptor. Y213 is modified (phosphotyrosine). Positions 388–400 (QVFRRRRNQDVRG) are enriched in basic and acidic residues. Residues 388–433 (QVFRRRRNQDVRGRYKAQPAPPELNSESEDYSPSSSETVRSPNSPF) form a disordered region. Residues S419, S428, and S431 each carry the phosphoserine modification.

This sequence belongs to the protein kinase superfamily. CAMK Ser/Thr protein kinase family. CaMK subfamily.

It catalyses the reaction L-seryl-[protein] + ATP = O-phospho-L-seryl-[protein] + ADP + H(+). The enzyme catalyses L-threonyl-[protein] + ATP = O-phospho-L-threonyl-[protein] + ADP + H(+). Its function is as follows. Probable kinase that may be involved in a calcium-signaling pathway controlling neuronal migration in the developing brain. May also participate in functions of the mature nervous system. The sequence is that of Serine/threonine-protein kinase DCLK1 (Dclk1) from Rattus norvegicus (Rat).